The primary structure comprises 656 residues: MVNEARGNSSLNPCLEGSASSGSESSKDSSRCSTPGLDPERHERLREKMRRRLESGDKWFSLEFFPPRTAEGAVNLISRFDRMAAGGPLYIDVTWHPAGDPGSDKETSSMMIASTAVNYCGLETILHMTCCRQRLEEITGHLHKAKQLGLKNIMALRGDPIGDQWEEEEGGFNYAVDLVKHIRSEFGDYFDICVAGYPKGHPEAGSFEADLKHLKEKVSAGADFIITQLFFEADTFFRFVKACTDMGITCPIVPGIFPIQGYHSLRQLVKLSKLEVPQEIKDVIEPIKDNDAAIRNYGIELAVSLCQELLASGLVPGLHFYTLNREMATTEVLKRLGMWTEDPRRPLPWALSAHPKRREEDVRPIFWASRPKSYIYRTQEWDEFPNGRWGNSSSPAFGELKDYYLFYLKSKSPKEELLKMWGEELTSEESVFEVFVLYLSGEPNRNGHKVTCLPWNDEPLAAETSLLKEELLRVNRQGILTINSQPNINGKPSSDPIVGWGPSGGYVFQKAYLEFFTSRETAEALLQVLKKYELRVNYHLVNVKGENITNAPELQPNAVTWGIFPGREIIQPTVVDPVSFMFWKDEAFALWIERWGKLYEEESPSRTIIQYIHDNYFLVNLVDNDFPLDNCLWQVVEDTLELLNRPTQNARETEAP.

Polar residues predominate over residues 1–12 (MVNEARGNSSLN). Residues 1–44 (MVNEARGNSSLNPCLEGSASSGSESSKDSSRCSTPGLDPERHER) form a disordered region. Phosphoserine is present on residues Ser9, Ser10, Ser18, Ser20, Ser21, Ser23, Ser25, Ser26, Ser29, and Ser30. Position 34 is a phosphothreonine (Thr34). Glu63 (proton donor/acceptor) is an active-site residue. 63–68 (EFFPPR) contacts NAD(+). Tyr90 is modified (phosphotyrosine). Position 94 is a phosphothreonine (Thr94). An NAD(+)-binding site is contributed by 94–95 (TW). 94–95 (TW) serves as a coordination point for FAD. A Phosphoserine modification is found at Ser103. FAD-binding positions include His127, 157–159 (RGD), 174–175 (YA), Tyr197, 201–204 (HPEA), Asp210, and Lys217. Asp159 provides a ligand contact to substrate. Substrate-binding residues include Gln228, Tyr321, and Arg325. Ser394 carries the phosphoserine modification. Thr451 carries the post-translational modification Phosphothreonine. Residues Asn456, 461-464 (AAET), 481-485 (TINSQ), Thr560, and Thr573 contribute to the S-adenosyl-L-methionine site.

The protein belongs to the methylenetetrahydrofolate reductase family. As to quaternary structure, homodimer. FAD serves as cofactor. In terms of processing, phosphorylation of an N-terminal serine-rich phosphorylation region increases sensitivity to S-adenosylmethionine and inhibition.

The catalysed reaction is (6S)-5-methyl-5,6,7,8-tetrahydrofolate + NADP(+) = (6R)-5,10-methylene-5,6,7,8-tetrahydrofolate + NADPH + H(+). It functions in the pathway one-carbon metabolism; tetrahydrofolate interconversion. Allosterically regulated by S-adenosylmethionine (SAM). Functionally, catalyzes the conversion of 5,10-methylenetetrahydrofolate to 5-methyltetrahydrofolate, a cosubstrate for homocysteine remethylation to methionine. Represents a key regulatory connection between the folate and methionine cycles. The sequence is that of Methylenetetrahydrofolate reductase (NADPH) from Homo sapiens (Human).